The chain runs to 243 residues: Carboxy-S-adenosyl-L-methionine synthase (243 aa).

S-adenosyl-L-methionine-binding positions include Tyr40, Gly65–Ser67, Asp90–Asn91, Asp118–Ile119, Asn133, and Arg200.

Belongs to the class I-like SAM-binding methyltransferase superfamily. Cx-SAM synthase family. Homodimer.

It catalyses the reaction prephenate + S-adenosyl-L-methionine = carboxy-S-adenosyl-L-methionine + 3-phenylpyruvate + H2O. Functionally, catalyzes the conversion of S-adenosyl-L-methionine (SAM) to carboxy-S-adenosyl-L-methionine (Cx-SAM). This Shewanella halifaxensis (strain HAW-EB4) protein is Carboxy-S-adenosyl-L-methionine synthase.